A 24-amino-acid chain; its full sequence is GVLSNVIGYLKKLGTGALNAVLKQ.

It belongs to the gastrin/cholecystokinin family. Magainin subfamily. Is synthesized in the stomach and stored in a novel granular multinucleated cell in the gastric mucosa. It is stored as active, processed peptides in large granules within the granular gland secretions of the skin.

It localises to the secreted. Functionally, antimicrobial peptide. This Xenopus laevis (African clawed frog) protein is Antimicrobial peptide PGQ (pgq).